The chain runs to 379 residues: Armadillo repeat-containing X-linked protein 3 (379 aa).

Topologically, residues 1 to 6 (MGYARK) are mitochondrial intermembrane. Mitochondrion outer membrane (MOM)-targeting sequence regions lie at residues 1–6 (MGYARK) and 26–37 (RLTRGRKQNKEK). Residues 7–29 (VGWVTAGLVIGAGACYCIYRLTR) traverse the membrane as a helical; Signal-anchor segment. Residues 30-379 (GRKQNKEKMA…TERMFPKSQE (350 aa)) are Cytoplasmic-facing. S61, S67, and S72 each carry phosphoserine. Residues 89-98 (RARARARARA) are nuclear localization signal. Basic residues predominate over residues 95–106 (RARATRARRAVQ). Residues 95 to 116 (RARATRARRAVQKRASPNSDDT) form a disordered region. S110 carries the phosphoserine modification. ARM repeat units follow at residues 111–151 (PNSD…NNAA), 153–192 (AFNR…NLSV), and 233–272 (VTNE…NLAE).

The protein belongs to the eutherian X-chromosome-specific Armcx family. As to quaternary structure, interacts (via ARM domain) with MIRO1, MIRO2 and TRAK2. The interaction with Miro is calcium-dependent. Interacts with Sox10. Highly expressed in the developing neural tissues, neural crest derivatives and hind limbs. Also widely expressed in the adult nervous tissue, especially in the forebrain, including the cerebral cortex, hippocampus and thalamus.

It localises to the mitochondrion outer membrane. It is found in the cytoplasm. The protein resides in the nucleus. Functionally, regulates mitochondrial aggregation and transport in axons in living neurons. May link mitochondria to the Trak2-kinesin motor complex via its interaction with Miro and Trak2. Mitochondrial distribution and dynamics is regulated through Armcx3 protein degradation, which is promoted by PCK and negatively regulated by Wnt1. Enhances the Sox10-mediated transactivation of the neuronal acetylcholine receptor subunit alpha-3 and beta-4 subunit gene promoters. The protein is Armadillo repeat-containing X-linked protein 3 (Armcx3) of Mus musculus (Mouse).